The primary structure comprises 607 residues: MSQVFDASAFLATCSARPGVYRMFDSETRLLYVGKAKNLKKRLASYFRKTGLAPKTAALVGRIAQVETTITANETEALLLEQNLIKQWRPPYNILLRDDKSYPYVFLSDGQFPRLGIHRGAKKAKGRYFGPYPSAGAIRESLSLLQKAFSVRQCEDSYYANRTRPCLQYQIKRCKGPCVGLVDAEEYAEDVRHSVMFLEGRSQQLGNELNAEMEKAAMALNFEKAAELRDQIALLRRVQDQQYMEGGSGDVDVVAAFVNPGGACVHLISVRGGRVLGSKNFFPQVGIEEEVAEVMAAFLSQYYLGNAERELPGELIVNVVHEDFAAISEALQTLRGRELTISHRVRGTRARWQQLAVTNAEQALNARLANRQHMAARFEALAEVLGLDEVPQRLECYDISHSSGEATVASCVVFGPEGPLKSDYRRFNIEGVTAGDDYAAMHQALTRRYGRIKDGEGKLPDVLLVDGGKGQLNMAREVMQELAFTDLTLLGVAKGVTRKAGFETLYLNDVAHEFTLKGDNPALHLIQQIRDEAHRFAITGHRARRGKARRVSSLEDVAGVGPKRRRDLLKHFGGLQELNRASIDEIAKAPGISKKLAESIYASLHSE.

Residues 16 to 94 (ARPGVYRMFD…IKQWRPPYNI (79 aa)) form the GIY-YIG domain. The UVR domain occupies 203 to 238 (QQLGNELNAEMEKAAMALNFEKAAELRDQIALLRRV).

The protein belongs to the UvrC family. As to quaternary structure, interacts with UvrB in an incision complex.

The protein localises to the cytoplasm. The UvrABC repair system catalyzes the recognition and processing of DNA lesions. UvrC both incises the 5' and 3' sides of the lesion. The N-terminal half is responsible for the 3' incision and the C-terminal half is responsible for the 5' incision. This chain is UvrABC system protein C, found in Pseudomonas putida (strain W619).